The primary structure comprises 490 residues: Cytochrome P450 2C28 (490 aa).

Position 127 is a phosphoserine (Ser-127). Residues Lys-249 and Lys-375 each carry the N6-acetyllysine modification. Cys-435 contacts heme.

This sequence belongs to the cytochrome P450 family. Heme is required as a cofactor. As to expression, liver.

Its subcellular location is the endoplasmic reticulum membrane. The protein localises to the microsome membrane. It catalyses the reaction an organic molecule + reduced [NADPH--hemoprotein reductase] + O2 = an alcohol + oxidized [NADPH--hemoprotein reductase] + H2O + H(+). Catalyzes the N-demethylation of aminopyrine and benzphetamine, but does not catalyze the hydroxylation of tolbutamide, testosterone, and progesterone. The sequence is that of Cytochrome P450 2C28 (CYP2C28) from Mesocricetus auratus (Golden hamster).